The chain runs to 451 residues: Tubulin alpha-3 chain (451 aa).

Gln11 contributes to the GTP binding site. An N6-acetyllysine modification is found at Lys40. Glu71, Ser140, Gly144, Thr145, Thr179, Asn206, and Asn228 together coordinate GTP. Glu71 lines the Mg(2+) pocket. The active site involves Glu254.

It belongs to the tubulin family. In terms of assembly, dimer of alpha and beta chains. A typical microtubule is a hollow water-filled tube with an outer diameter of 25 nm and an inner diameter of 15 nM. Alpha-beta heterodimers associate head-to-tail to form protofilaments running lengthwise along the microtubule wall with the beta-tubulin subunit facing the microtubule plus end conferring a structural polarity. Microtubules usually have 13 protofilaments but different protofilament numbers can be found in some organisms and specialized cells. It depends on Mg(2+) as a cofactor. In terms of processing, undergoes a tyrosination/detyrosination cycle, the cyclic removal and re-addition of a C-terminal tyrosine residue by the enzymes tubulin tyrosine carboxypeptidase (TTCP) and tubulin tyrosine ligase (TTL), respectively. Post-translationally, acetylation of alpha chains at Lys-40 stabilizes microtubules and affects affinity and processivity of microtubule motors. This modification has a role in multiple cellular functions, ranging from cell motility, cell cycle progression or cell differentiation to intracellular trafficking and signaling.

It is found in the cytoplasm. The protein resides in the cytoskeleton. It carries out the reaction GTP + H2O = GDP + phosphate + H(+). Its function is as follows. Tubulin is the major constituent of microtubules, a cylinder consisting of laterally associated linear protofilaments composed of alpha- and beta-tubulin heterodimers. Microtubules grow by the addition of GTP-tubulin dimers to the microtubule end, where a stabilizing cap forms. Below the cap, tubulin dimers are in GDP-bound state, owing to GTPase activity of alpha-tubulin. The polypeptide is Tubulin alpha-3 chain (Homarus americanus (American lobster)).